A 512-amino-acid polypeptide reads, in one-letter code: Cytochrome P450 monooxygenase 208 (512 aa).

Residues 4–24 traverse the membrane as a helical segment; it reads LFLVLDTGAAVLLVALLFVVY. Residue C438 coordinates heme.

It belongs to the cytochrome P450 family. The cofactor is heme.

It localises to the membrane. It participates in secondary metabolite biosynthesis. In terms of biological role, cytochrome P450 monooxygenase that is able to use 7-ethoxycoumarin as a substrate for oxidation. This is Cytochrome P450 monooxygenase 208 from Postia placenta (strain ATCC 44394 / Madison 698-R) (Brown rot fungus).